We begin with the raw amino-acid sequence, 135 residues long: Large ribosomal subunit protein uL16c (135 aa).

Belongs to the universal ribosomal protein uL16 family. Part of the 50S ribosomal subunit.

Its subcellular location is the plastid. It localises to the chloroplast. The chain is Large ribosomal subunit protein uL16c from Ceratophyllum demersum (Rigid hornwort).